The chain runs to 493 residues: 3-octaprenyl-4-hydroxybenzoate carboxy-lyase (493 aa).

Asn-172 provides a ligand contact to Mn(2+). Prenylated FMN-binding positions include 175 to 177 (IYR), 189 to 191 (RWL), and 194 to 195 (RG). Residue Glu-238 participates in Mn(2+) binding. Catalysis depends on Asp-287, which acts as the Proton donor.

Belongs to the UbiD family. Homohexamer. Requires prenylated FMN as cofactor. Mn(2+) is required as a cofactor.

The protein resides in the cell membrane. It catalyses the reaction a 4-hydroxy-3-(all-trans-polyprenyl)benzoate + H(+) = a 2-(all-trans-polyprenyl)phenol + CO2. The protein operates within cofactor biosynthesis; ubiquinone biosynthesis. Catalyzes the decarboxylation of 3-octaprenyl-4-hydroxy benzoate to 2-octaprenylphenol, an intermediate step in ubiquinone biosynthesis. The sequence is that of 3-octaprenyl-4-hydroxybenzoate carboxy-lyase from Shewanella putrefaciens (strain CN-32 / ATCC BAA-453).